A 435-amino-acid chain; its full sequence is Indole diterpene prenyltransferase atmD (435 aa).

L-tryptophan-binding positions include 81 to 82 (AY) and Glu-90. Positions 103, 190, 261, 263, 265, 346, and 413 each coordinate substrate.

Belongs to the tryptophan dimethylallyltransferase family.

Functionally, indole diterpene prenyltransferase; part of the ATM2 gene cluster that mediates the biosynthesis of aflatrem, a tremorgenic mycotoxin with acute neurotoxic effects. Synthesis of geranylgeranyl diphosphate (GGPP) by AtmG (a GGPP synthase) precedes condensation of GGPP with indole 3-glycerol phosphate, followed by epoxidation and cyclization by AtmM (a FAD-dependent monooxygenase) and AtmC (a prenyltransferase) to produce paspaline. AtmB is also essential for paspaline production, but its exact role has not been identified yet. AtmP, a cytochrome P450 monooxygenase, subsequently converts paspaline to 13-desoxypaxilline via PC-M6 by removal of the C-30 methyl group and oxidation at C-10. AtmQ, a cytochrome P450 monooxygenase, then catalyzes the oxidation of 13-desoxypaxilline, first at C-7 to produce paspalicine and then at C-13 to form paspalinine. Finally, AtmD prenylates paspalinine to form aflatrem. In Aspergillus flavus, this protein is Indole diterpene prenyltransferase atmD.